A 612-amino-acid polypeptide reads, in one-letter code: Proton pump-interactor 1 (612 aa).

Residues 1–58 (MGVEVVNSGGFEVAPAPFEGKPEKNGKLDQGKGDDAPINFGSVGELPKNAEENNNKVV) form a disordered region. The segment covering 20–35 (GKPEKNGKLDQGKGDD) has biased composition (basic and acidic residues). Coiled coils occupy residues 90–113 (PKIK…RTGV) and 251–314 (LDGV…NSEY). 4 stretches are compositionally biased toward basic and acidic residues: residues 374-387 (LSRD…DEKP), 434-446 (EKAK…KNVA), 459-498 (PQKE…EKAA), and 505-519 (AQKE…EQEK). The disordered stretch occupies residues 374 to 572 (LSRDGRMRNP…PIRNRTRGRG (199 aa)). Positions 466 to 526 (VDAATAKEMR…QEKKAKKKTG (61 aa)) form a coiled coil. Over residues 531–545 (TETEEVPEASEEEIE) the composition is skewed to acidic residues. Ser-540 bears the Phosphoserine mark. Basic and acidic residues predominate over residues 549 to 564 (QEEKPQKEKVFKEKPI). The helical transmembrane segment at 591-611 (VYAAPAALVVLLLLVLGYYYV) threads the bilayer.

The protein belongs to the plant Proton pump-interactor protein family. As to quaternary structure, interacts with AHA1 via N-terminal region. Strongly expressed in root and shoot vascular systems, particularly in meristematic and sink tissues. Also present in pollen, stigmas and siliques, but not in developing embryos.

It localises to the cell membrane. It is found in the endoplasmic reticulum membrane. In terms of biological role, promotes AHA1 plasma membrane ATPase activity by binding to a site different from the 14-3-3 binding site. This chain is Proton pump-interactor 1 (PPI1), found in Arabidopsis thaliana (Mouse-ear cress).